A 320-amino-acid polypeptide reads, in one-letter code: Formimidoylglutamase (320 aa).

Positions 125, 153, 155, 157, 244, and 246 each coordinate Mn(2+).

This sequence belongs to the arginase family. Mn(2+) serves as cofactor.

The catalysed reaction is N-formimidoyl-L-glutamate + H2O = formamide + L-glutamate. Its pathway is amino-acid degradation; L-histidine degradation into L-glutamate; L-glutamate from N-formimidoyl-L-glutamate (hydrolase route): step 1/1. Its function is as follows. Catalyzes the conversion of N-formimidoyl-L-glutamate to L-glutamate and formamide. The polypeptide is Formimidoylglutamase (Rhodococcus opacus (strain B4)).